An 80-amino-acid polypeptide reads, in one-letter code: U1-nemetoxin-Csp1a (80 aa).

Positions 1-20 (MKYFVVFCVLIIAVAAFTSA) are cleaved as a signal peptide. A propeptide spanning residues 21 to 41 (AEDGEVFEENPLEFPKTIQKR) is cleaved from the precursor. 4 disulfide bridges follow: C42–C56, C49–C60, C55–C77, and C66–C73.

Belongs to the neurotoxin 13 (insecticidal toxin ABC) family. 02 (Calisoga) subfamily. As to expression, expressed by the venom gland.

It is found in the secreted. Its function is as follows. Causes paralysis to insect larvae (H.virescens). This toxin is active only on insects. In Calisoga sp. (Spider), this protein is U1-nemetoxin-Csp1a.